Reading from the N-terminus, the 66-residue chain is Protein translocase subunit SecE (66 aa).

The chain crosses the membrane as a helical span at residues 29-49 (LVASTLVVVVAVFIFSLICLV).

It belongs to the SecE/SEC61-gamma family. In terms of assembly, component of the Sec protein translocase complex. Heterotrimer consisting of SecY, SecE and SecG subunits. The heterotrimers can form oligomers, although 1 heterotrimer is thought to be able to translocate proteins. Interacts with the ribosome. Interacts with SecDF, and other proteins may be involved. Interacts with SecA.

It localises to the cell inner membrane. Functionally, essential subunit of the Sec protein translocation channel SecYEG. Clamps together the 2 halves of SecY. May contact the channel plug during translocation. In Rickettsia felis (strain ATCC VR-1525 / URRWXCal2) (Rickettsia azadi), this protein is Protein translocase subunit SecE.